Here is a 616-residue protein sequence, read N- to C-terminus: DEAD-box ATP-dependent RNA helicase 53, mitochondrial (616 aa).

The N-terminal 81 residues, 1 to 81, are a transit peptide targeting the mitochondrion; it reads MITTVLRRSL…DFRASMVSQA (81 aa). The short motif at 104 to 132 is the Q motif element; the sequence is LAISELGISPEIVKALSSKGIEKLFPIQK. A Helicase ATP-binding domain is found at 135-309; sequence LEPAMEGRDM…KKYLNNPLTV (175 aa). 148-155 is a binding site for ATP; that stretch reads ARTGTGKT. The short motif at 257–260 is the DEAD box element; that stretch reads DEAD. Residues 338 to 482 enclose the Helicase C-terminal domain; the sequence is IIGPLVTEHA…ELPSIAVERG (145 aa). Residues 489–616 form a disordered region; it reads GIGSRSGGSF…FGSNDGKRSY (128 aa). 2 stretches are compositionally biased toward gly residues: residues 492 to 501 and 508 to 531; these read SRSGGSFGGG and SFGG…GRSG. 2 stretches are compositionally biased toward low complexity: residues 532-568 and 578-587; these read GSSN…SGGR and GSSNNRSSGF.

This sequence belongs to the DEAD box helicase family. DDX21/DDX50 subfamily.

The protein localises to the mitochondrion. The enzyme catalyses ATP + H2O = ADP + phosphate + H(+). The protein is DEAD-box ATP-dependent RNA helicase 53, mitochondrial (RH53) of Arabidopsis thaliana (Mouse-ear cress).